The sequence spans 335 residues: Holliday junction branch migration complex subunit RuvB (335 aa).

The large ATPase domain (RuvB-L) stretch occupies residues 2 to 184; the sequence is ADERIVSAEN…FGIVEHMAYY (183 aa). ATP is bound by residues leucine 23, arginine 24, glycine 65, lysine 68, threonine 69, threonine 70, 131-133, arginine 174, tyrosine 184, and arginine 221; that span reads EDF. Threonine 69 serves as a coordination point for Mg(2+). Residues 185–255 are small ATPAse domain (RuvB-S); sequence TEADLMDIVQ…IADHALSQLQ (71 aa). Positions 258–335 are head domain (RuvB-H); the sequence is IRGLDGVDRK…AHLGMPYPEK (78 aa). Positions 313 and 318 each coordinate DNA.

It belongs to the RuvB family. In terms of assembly, homohexamer. Forms an RuvA(8)-RuvB(12)-Holliday junction (HJ) complex. HJ DNA is sandwiched between 2 RuvA tetramers; dsDNA enters through RuvA and exits via RuvB. An RuvB hexamer assembles on each DNA strand where it exits the tetramer. Each RuvB hexamer is contacted by two RuvA subunits (via domain III) on 2 adjacent RuvB subunits; this complex drives branch migration. In the full resolvosome a probable DNA-RuvA(4)-RuvB(12)-RuvC(2) complex forms which resolves the HJ.

The protein resides in the cytoplasm. The enzyme catalyses ATP + H2O = ADP + phosphate + H(+). Functionally, the RuvA-RuvB-RuvC complex processes Holliday junction (HJ) DNA during genetic recombination and DNA repair, while the RuvA-RuvB complex plays an important role in the rescue of blocked DNA replication forks via replication fork reversal (RFR). RuvA specifically binds to HJ cruciform DNA, conferring on it an open structure. The RuvB hexamer acts as an ATP-dependent pump, pulling dsDNA into and through the RuvAB complex. RuvB forms 2 homohexamers on either side of HJ DNA bound by 1 or 2 RuvA tetramers; 4 subunits per hexamer contact DNA at a time. Coordinated motions by a converter formed by DNA-disengaged RuvB subunits stimulates ATP hydrolysis and nucleotide exchange. Immobilization of the converter enables RuvB to convert the ATP-contained energy into a lever motion, pulling 2 nucleotides of DNA out of the RuvA tetramer per ATP hydrolyzed, thus driving DNA branch migration. The RuvB motors rotate together with the DNA substrate, which together with the progressing nucleotide cycle form the mechanistic basis for DNA recombination by continuous HJ branch migration. Branch migration allows RuvC to scan DNA until it finds its consensus sequence, where it cleaves and resolves cruciform DNA. The polypeptide is Holliday junction branch migration complex subunit RuvB (Latilactobacillus sakei subsp. sakei (strain 23K) (Lactobacillus sakei subsp. sakei)).